Consider the following 371-residue polypeptide: Phosphate acyltransferase (371 aa).

The protein belongs to the PlsX family. In terms of assembly, homodimer. Probably interacts with PlsY.

It localises to the cytoplasm. It carries out the reaction a fatty acyl-[ACP] + phosphate = an acyl phosphate + holo-[ACP]. Its pathway is lipid metabolism; phospholipid metabolism. Its function is as follows. Catalyzes the reversible formation of acyl-phosphate (acyl-PO(4)) from acyl-[acyl-carrier-protein] (acyl-ACP). This enzyme utilizes acyl-ACP as fatty acyl donor, but not acyl-CoA. In Polaromonas sp. (strain JS666 / ATCC BAA-500), this protein is Phosphate acyltransferase.